The chain runs to 537 residues: Oocyte zinc finger protein XlCOF29 (537 aa).

Residues 1-21 (MGMSEKASDTGMKGKKKDKNE) are disordered. 6 consecutive C2H2-type zinc fingers follow at residues 375–397 (FTCSECGKTYTRLYNLKIHLKSH), 403–425 (FSCSECEECFTDHTDLVIHRRLH), 431–453 (FPCAECGKCFTNCTNLRAHSKTH), 459–481 (YSCTECGKTFRDRSHLNIHKKRH), 487–509 (YTCSECGKCFAYRSNLMVHVRIH), and 515–537 (FSCSKCGKCFTDHANLIVHERMH).

This sequence belongs to the krueppel C2H2-type zinc-finger protein family.

The protein localises to the nucleus. Its function is as follows. May be involved in transcriptional regulation. This chain is Oocyte zinc finger protein XlCOF29, found in Xenopus laevis (African clawed frog).